A 460-amino-acid polypeptide reads, in one-letter code: MTQLTMKDKIGYGLGDTACGFVWQATMFLLAYFYTDVFGLSAGIMGTLFLVSRVLDAVTDPLMGLLVDRTRTRHGQFRPFLLWGAIPFGIVCVLTFYTPDFSAQGKIIYACVTYILLTLVYTFVNVPYCAMPGVITADPKERHALQSWRFFLAAAGSLAISGIALPLVSIIGKGDEQVGYFGAMCVLGLSGVVLLYVCFFTTKERYTFEVQPGSSVAKDLKLLLGNSQWRIMCAFKMMATCSNVVRGGATLYFVKYVMDHPELATQFLLYGSLATMFGSLCSSRLLGRFDRVTAFKWIIVAYSLISLLIFVTPAEHIALIFALNILFLFVFNTTTPLQWLMASDVVDYEESRSGRRLDGLVFSTYLFSLKIGLAIGGAVVGWILAYVNYSASSSVQPVEVLTTIKILFCVVPVVLYAGMFIMLSLYKLTDARVEAISRQLIKHRAAQGEAVPDAATAASH.

The Cytoplasmic portion of the chain corresponds to 1-9; the sequence is MTQLTMKDK. Transmembrane regions (helical) follow at residues 10–30 and 31–51; these read IGYG…MFLL and AYFY…LFLV. The Cytoplasmic portion of the chain corresponds to 52–78; the sequence is SRVLDAVTDPLMGLLVDRTRTRHGQFR. Residues 79-99 traverse the membrane as a helical segment; sequence PFLLWGAIPFGIVCVLTFYTP. At 100-106 the chain is on the periplasmic side; the sequence is DFSAQGK. The chain crosses the membrane as a helical span at residues 107-127; that stretch reads IIYACVTYILLTLVYTFVNVP. The Cytoplasmic portion of the chain corresponds to 128–150; sequence YCAMPGVITADPKERHALQSWRF. The chain crosses the membrane as a helical span at residues 151–171; sequence FLAAAGSLAISGIALPLVSII. Topologically, residues 172–179 are periplasmic; the sequence is GKGDEQVG. Residues 180–200 form a helical membrane-spanning segment; it reads YFGAMCVLGLSGVVLLYVCFF. The Cytoplasmic portion of the chain corresponds to 201 to 262; the sequence is TTKERYTFEV…FVKYVMDHPE (62 aa). The helical transmembrane segment at 263–283 threads the bilayer; that stretch reads LATQFLLYGSLATMFGSLCSS. Topologically, residues 284–308 are periplasmic; that stretch reads RLLGRFDRVTAFKWIIVAYSLISLL. Residues 309-329 form a helical membrane-spanning segment; that stretch reads IFVTPAEHIALIFALNILFLF. Residues 330–366 are Cytoplasmic-facing; it reads VFNTTTPLQWLMASDVVDYEESRSGRRLDGLVFSTYL. The chain crosses the membrane as a helical span at residues 367-387; sequence FSLKIGLAIGGAVVGWILAYV. Over 388–405 the chain is Periplasmic; it reads NYSASSSVQPVEVLTTIK. The helical transmembrane segment at 406-426 threads the bilayer; that stretch reads ILFCVVPVVLYAGMFIMLSLY. The Cytoplasmic portion of the chain corresponds to 427-460; the sequence is KLTDARVEAISRQLIKHRAAQGEAVPDAATAASH.

The protein belongs to the sodium:galactoside symporter (TC 2.A.2) family.

Its subcellular location is the cell inner membrane. This Escherichia coli (strain K12) protein is Putative glycoside/cation symporter YagG (yagG).